A 1692-amino-acid chain; its full sequence is MRRPPPLGPTTASGPEGNVRNLQKRQAPGPGAAGGCGPEAGGCRENKQKRRMVARATPGRGEVESDKSVAASGAGKAARRQVEGRRGPVSPSDSSDPRGLEAAKEAELPLQTERHTKEKRKVTEASSDDPQPGLDLVRKESLTSSESFQTVECLQSLGKESIIEGIKRRIRNKKLKSLENPPLKITENEATQNIKVEFQDELYKNTPKYSCNILSPEVENNSVLKLRDCNCFPHSKGCNDENNLPYKPDGGCMHVAENFSKKENLRSLAEKSDTNSIPQLLQTEENVMGVNKLLPEESDLYQSKTNGLLSCLQHEKNKYSIEESSVGRKPRKRMKLSEKADETVTEMNFSNEYNKSELMLQENQMIADGKEAETKSPLNVLRKVSHNTVSLMDHLLSVPETVEKETSSEHHVNAVFQKTIEPLLKEETENASEPLGYESMASKEDFKSMKSFIGKSPNEYHIERRSSREDLRSASEELKLSCQRTIPMTGKRTWPYYSCARISAWCWKKASLPESSYFLRGSQESCRQVDVPKHQTNQTHLTDSKLLLQSSLTETNTESSSKEKLDSNSNCLSSVSAVEPTLMVIKEPIIKDDKKIKSEELSRRGSEVISNTTEDTQLTSETQSLTGNKKKARGNLTKLNLTATSKDGQEANNSAGKTIHRKACIAQQTFIVPDLVKILNTGRLTNFKIPLLKNKSEKRKEVNAKSSEREAYSPLELLDNLSGADVRQNRSKENVSMMMLGPQTLSIRNSVTPVQASSDSFYNKKSYSISPSFTKQGNNSKPSNHVSEPGNIVSNKEVASLTVENNAFSCDPGYVEKSPSFCCNEQETFRPVSSEVRGRKITKNFSEVGFPDILKAYEDDVLLIDVIQDDPDLFGVSNEGELSFTSEVPKISQEPNVAGEHQSTDSKYMETPVKKEPSDDLRELPVLDCGWIKPDICASNSAESEIKRDPKDVNTSLGEVANETSENETLGDFSEQIKGSDLDEKHRFTDKVITKEEKENIYEVCKSKDSRNADFMVGECQFAVPVPKPLCLLVPPLNLSGRQEDTILNTWMNDFRFLGKHSVLKLQNPETCEIFKREKNVGVFQKSLGLMIPYKYCKFHFNTLRGCERPLCKFAHVPEQGDEKVCMDVFKKYININELCLLQRAVNIFMEYYRKFPPGVYFDLQVLNDLLNSLLKHCLLKEVFQIVNLSIMVKMLPSLKILLNIFEYVATMKLRNAVPALIDIFCKLVEAGMVLDPEHFNYIVKLLYQVQASKQEITAVLEMKSRLQMRRFKKNWKCDLDSALNKLEHCKEKGDWTKLGKLYINVKMGCEKFADFQTFCACIAETLTKNYEDERPDIPFCEFAETVSKDPQNSKVDKGVLGRIGISAMYFYHKLLQWSKGRKVLEKLYELKIHFTSLKGLIGPEKLASRCQIVNVAAEIFLKSGSLDGAIWVMRESEWIINTPLWPCDRLDVLNRHNLLCTIAHEILAKSLYRQTFEVLQNLPGFQNSQETVEVSQYSLLFNKLLGSCIESSSLGMSSSVAEFMISKSIPIDFSFLRRLITSLGRSRLWLKARAHYKSALSLGCYPPLEGNLYRKLLLIPSYLSEIEMLLAIEIFMVSNASSIQSPGTSTQILQIVLKRCEDNQSRSNDDYQAAVERLIMAARISDPKLFVKHMTVNVNKEQVYSLEHCSALKWLKENMKWAGKVWLFSNH.

3 disordered regions span residues 1-135, 600-629, and 894-919; these read MRRP…PGLD, ELSR…TGNK, and EPNV…EPSD. Over residues 31 to 40 the composition is skewed to gly residues; sequence GAAGGCGPEA. Residues 95-116 are compositionally biased toward basic and acidic residues; the sequence is SDPRGLEAAKEAELPLQTERHT. Residues 608 to 627 show a composition bias toward polar residues; that stretch reads VISNTTEDTQLTSETQSLTG. Positions 902-919 are enriched in basic and acidic residues; that stretch reads QSTDSKYMETPVKKEPSD.

The protein resides in the cytoplasm. It is found in the cytosol. Important for normal spermatogenesis and male fertility. Specifically required for progression to the post-meiotic stages of spermatocyte development. Seems to be necessary for normal expression levels of a number of testis-expressed gene transcripts, although its role in this process is unclear. This is Protein TOPAZ1 (TOPAZ1) from Homo sapiens (Human).